Here is a 511-residue protein sequence, read N- to C-terminus: Potassium voltage-gated channel subfamily A member 10 (511 aa).

The tract at residues 22–50 (IQEEPGYATDFDSTSPKGRPGGSSFSNGK) is disordered. Residues 218–238 (VAVVSVLVVVISITIFCLETL) form a helical membrane-spanning segment. N256 is a glycosylation site (N-linked (GlcNAc...) asparagine). A helical membrane pass occupies residues 271 to 292 (FFMVESTCIVWFTFELVLRFVV). C293 carries S-palmitoyl cysteine lipidation. A helical transmembrane segment spans residues 303–323 (IMNIIDIISIIPYFATLITEL). N334 carries N-linked (GlcNAc...) asparagine glycosylation. Residues 339-358 (ILRIIRLVRVFRIFKLSRHS) traverse the membrane as a helical; Voltage-sensor segment. A helical membrane pass occupies residues 375–395 (LGLLIFFLFIGVILFSSAVYF). Residues 421–426 (TVGYGD) carry the Selectivity filter motif. The helical transmembrane segment at 436–456 (IVGTLCAIAGVLTIALPVPVI) threads the bilayer. Residues 489 to 511 (SRMGSTDSLNKTNGGCSTEKSRK) are disordered. Residue N498 is glycosylated (N-linked (GlcNAc...) asparagine).

Belongs to the potassium channel family. A (Shaker) (TC 1.A.1.2) subfamily. Kv1.8/KCNA10 sub-subfamily. Homotetramer. Interacts with KCN4B/POMP. Interaction with KCN4B/POMP is necessary for the modulation of channel activity by cAMP. In terms of tissue distribution, detected in kidney, in proximal tubules, glomerular endothelium, in vascular endothelium and in smooth muscle cells.

It is found in the membrane. It carries out the reaction K(+)(in) = K(+)(out). Its activity is regulated as follows. The channel activity is up-regulated by cAMP. In terms of biological role, voltage-gated potassium ion channel that mediates K(+) permeability of excitable membranes. When opened in response to the voltage difference across the membrane, KCNA10 channel selectively allows the flow of potassium ions across the membrane down their electrochemical gradient. In Homo sapiens (Human), this protein is Potassium voltage-gated channel subfamily A member 10.